Here is a 280-residue protein sequence, read N- to C-terminus: Bifunctional protein FolD (280 aa).

Residues Gly161–Ser163, Ser186, and Ile227 contribute to the NADP(+) site.

It belongs to the tetrahydrofolate dehydrogenase/cyclohydrolase family. Homodimer.

It carries out the reaction (6R)-5,10-methylene-5,6,7,8-tetrahydrofolate + NADP(+) = (6R)-5,10-methenyltetrahydrofolate + NADPH. The enzyme catalyses (6R)-5,10-methenyltetrahydrofolate + H2O = (6R)-10-formyltetrahydrofolate + H(+). The protein operates within one-carbon metabolism; tetrahydrofolate interconversion. In terms of biological role, catalyzes the oxidation of 5,10-methylenetetrahydrofolate to 5,10-methenyltetrahydrofolate and then the hydrolysis of 5,10-methenyltetrahydrofolate to 10-formyltetrahydrofolate. The polypeptide is Bifunctional protein FolD (Caldanaerobacter subterraneus subsp. tengcongensis (strain DSM 15242 / JCM 11007 / NBRC 100824 / MB4) (Thermoanaerobacter tengcongensis)).